Reading from the N-terminus, the 497-residue chain is Methionine--tRNA ligase (497 aa).

The 'HIGH' region signature appears at 14 to 24 (YYVNDVPHLGH). Residues C129, C132, C147, and H150 each coordinate Zn(2+). The short motif at 295–299 (KMSKT) is the 'KMSKS' region element. Residue K298 participates in ATP binding.

Belongs to the class-I aminoacyl-tRNA synthetase family. MetG type 2A subfamily. In terms of assembly, monomer. It depends on Zn(2+) as a cofactor.

Its subcellular location is the cytoplasm. It catalyses the reaction tRNA(Met) + L-methionine + ATP = L-methionyl-tRNA(Met) + AMP + diphosphate. Is required not only for elongation of protein synthesis but also for the initiation of all mRNA translation through initiator tRNA(fMet) aminoacylation. The chain is Methionine--tRNA ligase (metG) from Aquifex aeolicus (strain VF5).